The chain runs to 232 residues: Phosphatidylserine decarboxylase proenzyme (232 aa).

The active-site Schiff-base intermediate with substrate; via pyruvic acid is S190. Residue S190 is modified to Pyruvic acid (Ser); by autocatalysis.

This sequence belongs to the phosphatidylserine decarboxylase family. PSD-A subfamily. In terms of assembly, heterodimer of a large membrane-associated beta subunit and a small pyruvoyl-containing alpha subunit. Requires pyruvate as cofactor. Is synthesized initially as an inactive proenzyme. Formation of the active enzyme involves a self-maturation process in which the active site pyruvoyl group is generated from an internal serine residue via an autocatalytic post-translational modification. Two non-identical subunits are generated from the proenzyme in this reaction, and the pyruvate is formed at the N-terminus of the alpha chain, which is derived from the carboxyl end of the proenzyme. The post-translation cleavage follows an unusual pathway, termed non-hydrolytic serinolysis, in which the side chain hydroxyl group of the serine supplies its oxygen atom to form the C-terminus of the beta chain, while the remainder of the serine residue undergoes an oxidative deamination to produce ammonia and the pyruvoyl prosthetic group on the alpha chain.

The protein localises to the cell membrane. It catalyses the reaction a 1,2-diacyl-sn-glycero-3-phospho-L-serine + H(+) = a 1,2-diacyl-sn-glycero-3-phosphoethanolamine + CO2. It functions in the pathway phospholipid metabolism; phosphatidylethanolamine biosynthesis; phosphatidylethanolamine from CDP-diacylglycerol: step 2/2. Functionally, catalyzes the formation of phosphatidylethanolamine (PtdEtn) from phosphatidylserine (PtdSer). The chain is Phosphatidylserine decarboxylase proenzyme from Rhizobium etli (strain ATCC 51251 / DSM 11541 / JCM 21823 / NBRC 15573 / CFN 42).